We begin with the raw amino-acid sequence, 117 residues long: Peptidyl-tRNA hydrolase (117 aa).

The protein belongs to the PTH2 family.

The protein localises to the cytoplasm. It catalyses the reaction an N-acyl-L-alpha-aminoacyl-tRNA + H2O = an N-acyl-L-amino acid + a tRNA + H(+). Its function is as follows. The natural substrate for this enzyme may be peptidyl-tRNAs which drop off the ribosome during protein synthesis. In Metallosphaera sedula (strain ATCC 51363 / DSM 5348 / JCM 9185 / NBRC 15509 / TH2), this protein is Peptidyl-tRNA hydrolase.